Consider the following 138-residue polypeptide: MTLTVRVIAPDKTVWDSPAEEVILPSTTGQLGILSGHAPLLTALETGVMRVRSGKEWLPIALMGGFAEVENNEVTILVNAAERGDRIDRAQAEASYAAAQTKLSQAEQSDSRQAKIQAVQELKRARARVQAAGGVVEI.

Belongs to the ATPase epsilon chain family. F-type ATPases have 2 components, CF(1) - the catalytic core - and CF(0) - the membrane proton channel. CF(1) has five subunits: alpha(3), beta(3), gamma(1), delta(1), epsilon(1). CF(0) has three main subunits: a, b and c.

Its subcellular location is the cellular thylakoid membrane. In terms of biological role, produces ATP from ADP in the presence of a proton gradient across the membrane. This chain is ATP synthase epsilon chain, found in Cyanothece sp. (strain PCC 7425 / ATCC 29141).